Here is a 683-residue protein sequence, read N- to C-terminus: UvrABC system protein B (683 aa).

A disordered region spans residues 1 to 29 (MTDTGPLQPDRPDLDRPLSVDAPFEPAGD). The Helicase ATP-binding domain occupies 39–417 (AGFESGAEKQ…PGDYERDHSE (379 aa)). 52–59 (GVTGSGKT) is an ATP binding site. Residues 105–128 (YYDYYQPEAYVEQTDTYIDKDMSI) carry the Beta-hairpin motif. Positions 442–604 (QVEDLIERIQ…EPRTIEKPVS (163 aa)) constitute a Helicase C-terminal domain. Positions 587–603 (EFNAEHGHEPRTIEKPV) are enriched in basic and acidic residues. The tract at residues 587 to 620 (EFNAEHGHEPRTIEKPVSETNLPGSSTDTDGVAD) is disordered. Residues 604 to 615 (SETNLPGSSTDT) are compositionally biased toward polar residues. A UVR domain is found at 630-665 (EQLIERLETRMQEAADNLEFELAADIRDRIRELRET).

It belongs to the UvrB family. As to quaternary structure, forms a heterotetramer with UvrA during the search for lesions. Interacts with UvrC in an incision complex.

The protein localises to the cytoplasm. In terms of biological role, the UvrABC repair system catalyzes the recognition and processing of DNA lesions. A damage recognition complex composed of 2 UvrA and 2 UvrB subunits scans DNA for abnormalities. Upon binding of the UvrA(2)B(2) complex to a putative damaged site, the DNA wraps around one UvrB monomer. DNA wrap is dependent on ATP binding by UvrB and probably causes local melting of the DNA helix, facilitating insertion of UvrB beta-hairpin between the DNA strands. Then UvrB probes one DNA strand for the presence of a lesion. If a lesion is found the UvrA subunits dissociate and the UvrB-DNA preincision complex is formed. This complex is subsequently bound by UvrC and the second UvrB is released. If no lesion is found, the DNA wraps around the other UvrB subunit that will check the other stand for damage. The protein is UvrABC system protein B of Natronomonas pharaonis (strain ATCC 35678 / DSM 2160 / CIP 103997 / JCM 8858 / NBRC 14720 / NCIMB 2260 / Gabara) (Halobacterium pharaonis).